We begin with the raw amino-acid sequence, 446 residues long: Protein IQ-DOMAIN 19 (446 aa).

Positions 93–140 are disordered; the sequence is IPGTPKEKRRWSFRRSSATGPPPPACAITLKDSPPPPPPPPPPPPLQQ. A compositionally biased stretch (pro residues) spans 125-139; sequence SPPPPPPPPPPPPLQ. 2 consecutive IQ domains span residues 163–191 and 192–214; these read EEFA…GLVK and LQAL…CMQA. The interval 214–231 is calmodulin-binding; it reads ALITLQAKAREQRIRMIG. Residues 332 to 345 are compositionally biased toward low complexity; sequence QSSKAKARSQSAPK. A disordered region spans residues 332–398; it reads QSSKAKARSQ…TAKESQQHHH (67 aa). Residues 379–392 show a composition bias toward polar residues; it reads QRSSSQLGSNTAKE.

The protein belongs to the IQD family. As to quaternary structure, binds to multiple calmodulin (CaM) in the presence of Ca(2+) and CaM-like proteins.

Its subcellular location is the cytoplasm. It is found in the cytoskeleton. The protein resides in the cell membrane. Its function is as follows. May be involved in cooperative interactions with calmodulins or calmodulin-like proteins. Recruits calmodulin proteins to microtubules, thus being a potential scaffold in cellular signaling and trafficking. Acts as a positive regulator of trichome branch initiation. May associate with nucleic acids and regulate gene expression at the transcriptional or post-transcriptional level. The protein is Protein IQ-DOMAIN 19 of Arabidopsis thaliana (Mouse-ear cress).